The following is a 240-amino-acid chain: Probable septum site-determining protein MinC (240 aa).

It belongs to the MinC family. In terms of assembly, interacts with MinD and FtsZ.

Its function is as follows. Cell division inhibitor that blocks the formation of polar Z ring septums. Rapidly oscillates between the poles of the cell to destabilize FtsZ filaments that have formed before they mature into polar Z rings. Prevents FtsZ polymerization. This chain is Probable septum site-determining protein MinC, found in Acinetobacter baumannii (strain ATCC 17978 / DSM 105126 / CIP 53.77 / LMG 1025 / NCDC KC755 / 5377).